Reading from the N-terminus, the 261-residue chain is Putative diacylated glycolipid transporter LprF (261 aa).

The signal sequence occupies residues 1 to 38 (MNGLISQACGSHRPRRPSSLGAVAILIAATLFATVVAG). The N-palmitoyl cysteine moiety is linked to residue Cys-39. Residue Cys-39 is the site of S-diacylglycerol cysteine attachment. The interval 42–61 (KPTTASSPSPGSPSPEAQQI) is disordered.

It belongs to the LppX/LprAFG lipoprotein family. As to quaternary structure, monomer. Post-translationally, modified by Lgt on Cys-39 with an S-linked diacylglycerol with a mixture of C16, C18 and C19 fatty acids (palmitic, stearic and tuberculostearic acid respectively), signal peptide is removed by LspA, modified by Lnt with an amide-linked mixture of C16 and C19 fatty acids.

It is found in the cell membrane. Its function is as follows. Might be involved in transporting short diacylated glycolipids to the cell outer membrane. Binds glycolipids that contain a diacylated glycerophosphate or a diacylated phosphatidylinositol moiety with C14 and C16 chains (upon overexpression in M.smegmatis; M.smegmatis does not encode this gene). Overexpression in M.smegmatis increases the cell wall glycolipid LAM/LM ratio (lipoarabinomannan/lipomannan), suggesting perhaps this protein is involved in the preferential translocation of diacylated LAM to the outer cell membrane. Overexpressing M.smegmatis cells adhere less well to hexadecane droplets, indicating decrease in the hydrophobicity of the cell surface, and have a slightly increased resistance to the antibiotic ethambutol. This is Putative diacylated glycolipid transporter LprF (lprF) from Mycobacterium bovis (strain ATCC BAA-935 / AF2122/97).